A 360-amino-acid polypeptide reads, in one-letter code: D-alanine--D-alanine ligase (360 aa).

Positions 146–352 (KLCVADAGIA…FPELAERLLQ (207 aa)) constitute an ATP-grasp domain. 179–234 (EEKFIYPFFVKPANLGSSIGISKVHHREQLPAALKSACSLDSKIVVEKAITGREIE) contacts ATP. Mg(2+) contacts are provided by aspartate 305, glutamate 319, and asparagine 321.

This sequence belongs to the D-alanine--D-alanine ligase family. It depends on Mg(2+) as a cofactor. Requires Mn(2+) as cofactor.

It localises to the cytoplasm. The catalysed reaction is 2 D-alanine + ATP = D-alanyl-D-alanine + ADP + phosphate + H(+). It functions in the pathway cell wall biogenesis; peptidoglycan biosynthesis. In terms of biological role, cell wall formation. The chain is D-alanine--D-alanine ligase from Pelodictyon phaeoclathratiforme (strain DSM 5477 / BU-1).